The primary structure comprises 1310 residues: Zinc finger protein 521 (1310 aa).

The span at 1–10 (MSRRKQAKPR) shows a compositional bias: basic residues. Positions 1–46 (MSRRKQAKPRSLKDPNCKLEDTSEDGESPDCKKRQEEGDELEEEEA) are disordered. The span at 11-21 (SLKDPNCKLED) shows a compositional bias: basic and acidic residues. Residues 48–68 (HSCDSCLQVFESLSDITEHKI) form a C2H2-type 1; degenerate zinc finger. The segment at 82 to 106 (DPTCSWPASSPSSKDQASPIHGEGF) is disordered. Polar residues predominate over residues 87–97 (WPASSPSSKDQ). C2H2-type zinc fingers lie at residues 119-141 (YPCQ…EQSH), 147-169 (FKCT…IKLH), 175-197 (YHCS…LKTH), 203-225 (YKCA…MQVH), 247-270 (QKCS…AECH), 282-305 (LQCM…EQIH), and 311-333 (NSCN…MDSH). The C2H2-type 9; degenerate zinc finger occupies 404-428 (YSCIYCSKQLFSSLAVLQIHLKTMH). C2H2-type zinc fingers lie at residues 436 to 459 (HICQ…KQVH), 476 to 499 (YQCN…RSSH), and 512 to 535 (FFCP…RQVH). The segment at 559–584 (YSCSYCTNSPIFNSVLKLNKHIKENH) adopts a C2H2-type 13; atypical zinc-finger fold. 7 C2H2-type zinc fingers span residues 633–655 (YICN…LKTH), 663–685 (LTCP…VTIH), 693–716 (YICE…LDMH), 721–744 (FRCT…AVKH), 751–774 (YRCT…KHNH), 782–804 (HKCI…ITTH), and 808–831 (YNCK…REKH). Residues 885–907 (YGCDICGAAYTMESLLQNHQLRD) form a C2H2-type 21; degenerate zinc finger. C2H2-type zinc fingers lie at residues 929 to 951 (YKCN…MQTH), 958 to 980 (YMCP…KVTH), and 1019 to 1041 (FRCV…GTFH). The segment at 1064–1082 (YKCASCLKEFRSKQDLVKL) adopts a C2H2-type 25; degenerate zinc-finger fold. C2H2-type zinc fingers lie at residues 1138–1161 (TRCS…QTIH), 1194–1216 (YQCI…VANH), 1224–1246 (HECK…LIEH), 1255–1278 (FKCP…FSAH), and 1285–1308 (YDCA…MSQH).

Belongs to the krueppel C2H2-type zinc-finger protein family.

It localises to the nucleus. In terms of biological role, transcription factor that can both act as an activator or a repressor depending on the context. Involved in BMP signaling and in the regulation of the immature compartment of the hematopoietic system. The sequence is that of Zinc finger protein 521 (znf521) from Xenopus laevis (African clawed frog).